The primary structure comprises 426 residues: Histidine--tRNA ligase (426 aa).

The protein belongs to the class-II aminoacyl-tRNA synthetase family. Homodimer.

The protein resides in the cytoplasm. It catalyses the reaction tRNA(His) + L-histidine + ATP = L-histidyl-tRNA(His) + AMP + diphosphate + H(+). The polypeptide is Histidine--tRNA ligase (Pseudoalteromonas atlantica (strain T6c / ATCC BAA-1087)).